The chain runs to 237 residues: Orotidine 5'-phosphate decarboxylase (237 aa).

Residues Asp11, Lys34, 61-70 (DLKLHDIPNT), Thr124, Arg186, Gln195, Gly215, and Arg216 contribute to the substrate site. The active-site Proton donor is the Lys63.

The protein belongs to the OMP decarboxylase family. Type 1 subfamily. As to quaternary structure, homodimer.

The enzyme catalyses orotidine 5'-phosphate + H(+) = UMP + CO2. It functions in the pathway pyrimidine metabolism; UMP biosynthesis via de novo pathway; UMP from orotate: step 2/2. Catalyzes the decarboxylation of orotidine 5'-monophosphate (OMP) to uridine 5'-monophosphate (UMP). The polypeptide is Orotidine 5'-phosphate decarboxylase (Lactococcus lactis subsp. cremoris (strain MG1363)).